The chain runs to 179 residues: SCAN domain-containing protein 1 (179 aa).

Residues 1 to 108 are disordered; the sequence is MAATEPILAA…GSRLGPETFR (108 aa). A compositionally biased stretch (low complexity) spans 60–80; it reads AIPTPQAAASAAPELPLGPAP. Residues 108–166 form the SCAN box domain; the sequence is RQRFRQFRYQDAAGPREAFRQLRELSRQWLRPDIRTKEQIVEMLVQEQLLAILPEAARA.

As to quaternary structure, interacts with ZNF202.

The protein localises to the nucleus. Its function is as follows. May regulate transcriptional activity. In Pongo pygmaeus (Bornean orangutan), this protein is SCAN domain-containing protein 1 (SCAND1).